Here is a 269-residue protein sequence, read N- to C-terminus: 5'-nucleotidase SurE (269 aa).

A divalent metal cation is bound by residues aspartate 11, aspartate 12, serine 43, and asparagine 101.

The protein belongs to the SurE nucleotidase family. The cofactor is a divalent metal cation.

It is found in the cytoplasm. The catalysed reaction is a ribonucleoside 5'-phosphate + H2O = a ribonucleoside + phosphate. Functionally, nucleotidase that shows phosphatase activity on nucleoside 5'-monophosphates. The chain is 5'-nucleotidase SurE from Prochlorococcus marinus (strain MIT 9313).